We begin with the raw amino-acid sequence, 122 residues long: Large ribosomal subunit protein uL14 (122 aa).

This sequence belongs to the universal ribosomal protein uL14 family. In terms of assembly, part of the 50S ribosomal subunit. Forms a cluster with proteins L3 and L19. In the 70S ribosome, L14 and L19 interact and together make contacts with the 16S rRNA in bridges B5 and B8.

Its function is as follows. Binds to 23S rRNA. Forms part of two intersubunit bridges in the 70S ribosome. This chain is Large ribosomal subunit protein uL14, found in Halorhodospira halophila (strain DSM 244 / SL1) (Ectothiorhodospira halophila (strain DSM 244 / SL1)).